The sequence spans 678 residues: Penicillin-binding protein activator LpoA (678 aa).

An N-terminal signal peptide occupies residues 1-26 (MVPSTFSRLKAARCLPVVLAALIFAG). A lipid anchor (N-palmitoyl cysteine) is attached at cysteine 27. Residue cysteine 27 is the site of S-diacylglycerol cysteine attachment. Composition is skewed to low complexity over residues 300 to 310 (AADVAEQPQPQ), 330 to 340 (QPAAQPVPVSA), and 513 to 528 (TTNN…DDQF). 2 disordered regions span residues 300–340 (AADV…PVSA) and 496–528 (ALTG…DDQF).

Belongs to the LpoA family. As to quaternary structure, interacts with PBP1a.

Its subcellular location is the cell outer membrane. Functionally, regulator of peptidoglycan synthesis that is essential for the function of penicillin-binding protein 1A (PBP1a). This is Penicillin-binding protein activator LpoA from Shigella flexneri serotype 5b (strain 8401).